A 145-amino-acid polypeptide reads, in one-letter code: Small ribosomal subunit protein bS6 (145 aa).

Residues 113-132 (ENMKKNERKAPKEPVKKDEE) are compositionally biased toward basic and acidic residues. The interval 113 to 145 (ENMKKNERKAPKEPVKKDEEENKESEEEITSEE) is disordered. Residues 133 to 145 (ENKESEEEITSEE) show a composition bias toward acidic residues.

It belongs to the bacterial ribosomal protein bS6 family.

Its function is as follows. Binds together with bS18 to 16S ribosomal RNA. The protein is Small ribosomal subunit protein bS6 of Campylobacter hominis (strain ATCC BAA-381 / DSM 21671 / CCUG 45161 / LMG 19568 / NCTC 13146 / CH001A).